The following is a 187-amino-acid chain: UPF0398 protein LJ_1195 (187 aa).

Belongs to the UPF0398 family.

In Lactobacillus johnsonii (strain CNCM I-12250 / La1 / NCC 533), this protein is UPF0398 protein LJ_1195.